We begin with the raw amino-acid sequence, 394 residues long: Phosphopentomutase (394 aa).

Mn(2+)-binding residues include aspartate 13, aspartate 286, histidine 291, aspartate 327, histidine 328, and histidine 339.

Belongs to the phosphopentomutase family. Mn(2+) serves as cofactor.

It localises to the cytoplasm. The enzyme catalyses 2-deoxy-alpha-D-ribose 1-phosphate = 2-deoxy-D-ribose 5-phosphate. The catalysed reaction is alpha-D-ribose 1-phosphate = D-ribose 5-phosphate. It participates in carbohydrate degradation; 2-deoxy-D-ribose 1-phosphate degradation; D-glyceraldehyde 3-phosphate and acetaldehyde from 2-deoxy-alpha-D-ribose 1-phosphate: step 1/2. In terms of biological role, isomerase that catalyzes the conversion of deoxy-ribose 1-phosphate (dRib-1-P) and ribose 1-phosphate (Rib-1-P) to deoxy-ribose 5-phosphate (dRib-5-P) and ribose 5-phosphate (Rib-5-P), respectively. This is Phosphopentomutase from Bacillus cereus (strain ATCC 10987 / NRS 248).